Consider the following 129-residue polypeptide: UPF0325 protein ECA1027 (129 aa).

Belongs to the UPF0325 family.

This is UPF0325 protein ECA1027 from Pectobacterium atrosepticum (strain SCRI 1043 / ATCC BAA-672) (Erwinia carotovora subsp. atroseptica).